The primary structure comprises 161 residues: Nucleotide-binding protein Gura_0717 (161 aa).

Belongs to the YajQ family.

Nucleotide-binding protein. The sequence is that of Nucleotide-binding protein Gura_0717 from Geotalea uraniireducens (strain Rf4) (Geobacter uraniireducens).